The sequence spans 788 residues: Ribosome biogenesis protein ERB1 (788 aa).

Positions 1–91 (MGDLKGSRKR…SKPIREKSKP (91 aa)) are disordered. A compositionally biased stretch (basic and acidic residues) spans 38–50 (LSDKSHDTEHSSD). The segment covering 51 to 78 (SEIELVDDLSSDDGEEYEDEFDSDEIPS) has biased composition (acidic residues). Basic and acidic residues predominate over residues 80–91 (IESKPIREKSKP). 6 WD repeats span residues 433-472 (GHSG…QIWS), 476-516 (SDEE…PEME), 613-651 (KGGG…LVKI), 654-699 (PGAR…RPYK), 703-742 (YHQK…DLLS), and 758-788 (TGEL…RLWT).

The protein belongs to the WD repeat BOP1/ERB1 family. As to quaternary structure, component of the NOP7 complex, composed of ERB1, NOP7 and YTM1. The complex is held together by ERB1, which interacts with NOP7 via its N-terminal domain and with YTM1 via a high-affinity interaction between the seven-bladed beta-propeller domains of the 2 proteins. The NOP7 complex associates with the 66S pre-ribosome.

The protein localises to the nucleus. It is found in the nucleolus. It localises to the nucleoplasm. Component of the NOP7 complex, which is required for maturation of the 25S and 5.8S ribosomal RNAs and formation of the 60S ribosome. This is Ribosome biogenesis protein ERB1 from Ajellomyces capsulatus (strain NAm1 / WU24) (Darling's disease fungus).